Reading from the N-terminus, the 264-residue chain is GTP cyclohydrolase FolE2 (264 aa).

Belongs to the GTP cyclohydrolase IV family.

It carries out the reaction GTP + H2O = 7,8-dihydroneopterin 3'-triphosphate + formate + H(+). The protein operates within cofactor biosynthesis; 7,8-dihydroneopterin triphosphate biosynthesis; 7,8-dihydroneopterin triphosphate from GTP: step 1/1. Converts GTP to 7,8-dihydroneopterin triphosphate. This is GTP cyclohydrolase FolE2 from Nitratidesulfovibrio vulgaris (strain ATCC 29579 / DSM 644 / CCUG 34227 / NCIMB 8303 / VKM B-1760 / Hildenborough) (Desulfovibrio vulgaris).